A 292-amino-acid polypeptide reads, in one-letter code: Nitrogenase iron protein (292 aa).

8-15 (GKGGIGKS) provides a ligand contact to ATP. Residue C96 coordinates [4Fe-4S] cluster. ADP-ribosylarginine; by dinitrogenase reductase ADP-ribosyltransferase is present on R99. C130 is a [4Fe-4S] cluster binding site.

It belongs to the NifH/BchL/ChlL family. In terms of assembly, homodimer. Requires [4Fe-4S] cluster as cofactor. The reversible ADP-ribosylation of Arg-99 inactivates the nitrogenase reductase and regulates nitrogenase activity.

It carries out the reaction N2 + 8 reduced [2Fe-2S]-[ferredoxin] + 16 ATP + 16 H2O = H2 + 8 oxidized [2Fe-2S]-[ferredoxin] + 2 NH4(+) + 16 ADP + 16 phosphate + 6 H(+). In terms of biological role, the key enzymatic reactions in nitrogen fixation are catalyzed by the nitrogenase complex, which has 2 components: the iron protein and the molybdenum-iron protein. The polypeptide is Nitrogenase iron protein (Synechococcus sp. (strain JA-3-3Ab) (Cyanobacteria bacterium Yellowstone A-Prime)).